We begin with the raw amino-acid sequence, 236 residues long: uncharacterized protein (236 aa).

This is an uncharacterized protein from Escherichia coli O157:H7.